Reading from the N-terminus, the 837-residue chain is AdoMet-dependent rRNA methyltransferase SPB1 (837 aa).

The S-adenosyl-L-methionine site is built by Gly-58, Trp-60, Asp-78, Asp-94, and Asp-119. Lys-159 serves as the catalytic Proton acceptor. Positions 345–390 form a coiled coil; sequence LNEEEQIEKELRDLQEKQKQKQKREKRRKNEEKQKELTRMQMNMLT. 4 disordered regions span residues 359–381, 483–529, 573–644, and 779–808; these read QEKQ…QKEL, FRAK…DEDD, TDDV…TTKE, and TKKQ…KGIK. Residues 372–381 show a composition bias toward basic and acidic residues; it reads RKNEEKQKEL. The segment covering 518–529 has biased composition (acidic residues); sequence ESDDSELSDEDD. The span at 593 to 602 shows a compositional bias: basic and acidic residues; sequence SYNEMKKEDL. The span at 603–635 shows a compositional bias: acidic residues; the sequence is SDSSDEDSSSESDFEIVANDESDGDIDSDYDSD.

Belongs to the class I-like SAM-binding methyltransferase superfamily. RNA methyltransferase RlmE family. SPB1 subfamily. As to quaternary structure, component of the nucleolar and nucleoplasmic pre-60S ribosomal particle.

It is found in the nucleus. It localises to the nucleolus. The catalysed reaction is a ribonucleotide in rRNA + S-adenosyl-L-methionine = a 2'-O-methylribonucleotide in rRNA + S-adenosyl-L-homocysteine + H(+). Required for proper assembly of pre-ribosomal particles during the biogenesis of the 60S ribosomal subunit. This is AdoMet-dependent rRNA methyltransferase SPB1 from Candida glabrata (strain ATCC 2001 / BCRC 20586 / JCM 3761 / NBRC 0622 / NRRL Y-65 / CBS 138) (Yeast).